The sequence spans 528 residues: U3 small nucleolar RNA-associated protein 15 homolog (528 aa).

Position 2 is an N-acetylalanine (alanine 2). 7 WD repeats span residues 36–75, 78–117, 120–159, 162–202, 204–242, 246–285, and 287–326; these read KEFG…PVKT, RFKD…PLRQ, GHTK…EILT, EHSD…NVLC, EHGQ…QLLV, NHHK…VVHS, and DYAA…KKES. A Glycyl lysine isopeptide (Lys-Gly) (interchain with G-Cter in SUMO2) cross-link involves residue lysine 249. The disordered stretch occupies residues 508-528; that stretch reads AELPEEKTESPRQPSDTDKNS. Positions 511–528 are enriched in basic and acidic residues; it reads PEEKTESPRQPSDTDKNS.

As to quaternary structure, part of the small subunit (SSU) processome, composed of more than 70 proteins and the RNA chaperone small nucleolar RNA (snoRNA) U3. May be a component of the proposed t-UTP subcomplex of the ribosomal small subunit (SSU) processome containing at least UTP4, WDR43, HEATR1, UTP15, WDR75. Interacts directly with UTP4 and WDR43.

The protein resides in the nucleus. The protein localises to the nucleolus. Functionally, ribosome biogenesis factor. Involved in nucleolar processing of pre-18S ribosomal RNA. Required for optimal pre-ribosomal RNA transcription by RNA polymerase I. Part of the small subunit (SSU) processome, first precursor of the small eukaryotic ribosomal subunit. During the assembly of the SSU processome in the nucleolus, many ribosome biogenesis factors, an RNA chaperone and ribosomal proteins associate with the nascent pre-rRNA and work in concert to generate RNA folding, modifications, rearrangements and cleavage as well as targeted degradation of pre-ribosomal RNA by the RNA exosome. The chain is U3 small nucleolar RNA-associated protein 15 homolog from Rattus norvegicus (Rat).